Reading from the N-terminus, the 193-residue chain is Flagellin B1 (193 aa).

A propeptide spanning residues 1–12 (MFEFITDEDERG) is cleaved from the precursor.

Belongs to the archaeal flagellin family. Post-translationally, glycosylated.

The protein resides in the archaeal flagellum. Functionally, flagellin is the subunit protein which polymerizes to form the filaments of archaeal flagella. This is Flagellin B1 (flaB1) from Halobacterium salinarum (strain ATCC 700922 / JCM 11081 / NRC-1) (Halobacterium halobium).